Reading from the N-terminus, the 159-residue chain is Ecotin (159 aa).

The first 22 residues, 1–22, serve as a signal peptide directing secretion; the sequence is MRPTPMTAILALSLAAAAPAMA. Cysteines 68 and 105 form a disulfide.

Belongs to the protease inhibitor I11 (ecotin) family. In terms of assembly, homodimer.

It is found in the periplasm. General inhibitor of family S1 serine proteases. The polypeptide is Ecotin (Pseudomonas putida (strain ATCC 700007 / DSM 6899 / JCM 31910 / BCRC 17059 / LMG 24140 / F1)).